Consider the following 464-residue polypeptide: Cysteine--tRNA ligase (464 aa).

Cys28 lines the Zn(2+) pocket. Positions 30 to 40 (VTVYDFCHIGH) match the 'HIGH' region motif. The Zn(2+) site is built by Cys209, His234, and Glu238. A 'KMSKS' region motif is present at residues 266–270 (KMSKS). Lys269 contributes to the ATP binding site.

Belongs to the class-I aminoacyl-tRNA synthetase family. Monomer. It depends on Zn(2+) as a cofactor.

It localises to the cytoplasm. It carries out the reaction tRNA(Cys) + L-cysteine + ATP = L-cysteinyl-tRNA(Cys) + AMP + diphosphate. The protein is Cysteine--tRNA ligase (cysS) of Buchnera aphidicola subsp. Acyrthosiphon pisum (strain APS) (Acyrthosiphon pisum symbiotic bacterium).